A 108-amino-acid chain; its full sequence is Guanine nucleotide-binding protein subunit gamma (108 aa).

A lipid anchor (S-palmitoyl cysteine) is attached at C104. C105 carries the post-translational modification Cysteine methyl ester. C105 carries the S-farnesyl cysteine lipid modification. A propeptide spans 106-108 (removed in mature form); it reads VIS.

It belongs to the G protein gamma family. As to quaternary structure, g proteins are composed of 3 units, alpha, beta and gamma.

It is found in the membrane. This is Guanine nucleotide-binding protein subunit gamma from Yarrowia lipolytica (strain CLIB 122 / E 150) (Yeast).